The chain runs to 243 residues: Putative ABC transporter arginine-binding protein 2 (243 aa).

A signal peptide spans 1–19 (MKKVLIAALIAGFSLSATA).

It belongs to the bacterial solute-binding protein 3 family. As to quaternary structure, the complex is composed of two ATP-binding proteins (ArtP), two transmembrane proteins (ArtM and ArtQ) and two solute-binding proteins (ArtJ and ArtI).

It is found in the periplasm. Part of the ABC transporter complex ArtPIQMJ involved in arginine transport. In Escherichia coli (strain K12), this protein is Putative ABC transporter arginine-binding protein 2 (artI).